A 63-amino-acid polypeptide reads, in one-letter code: Conotoxin Pn-B01411 (63 aa).

An N-terminal signal peptide occupies residues 1–22 (MRCFPVFIILLLLMASAPSFDA). The propeptide occupies 23–49 (RPKTEDDVPLSSFRDNLKRTLRTLLDP). Position 62 is an isoleucine amide (Ile62).

This sequence belongs to the conotoxin T superfamily. Contains 2 disulfide bonds that can be either 'C1-C3, C2-C4' or 'C1-C4, C2-C3', since these disulfide connectivities have been observed for conotoxins with cysteine framework V (for examples, see AC P0DQQ7 and AC P81755). Expressed by the venom duct.

It is found in the secreted. The sequence is that of Conotoxin Pn-B01411 from Conus pennaceus (Feathered cone).